The sequence spans 282 residues: MFERNVPSVLLRNIGVSAADPQARFSVAARVRNASNDAHGFGEPISFLLDVAAGAQDASLRGVVDLRRAHPDLVDVSCTARGIPLAVPAPAEGFPELSGVLGLHTQVFVRKDHSVELKMGARISDSVLRAAPFEPRVLFDVYADVLRQIRQIAFEATVRVSAEGALSISVESDADGAFVRALSRAFAQQVDALRRAVIAEGERFLAQQRRVYAQEIAQVTQLVSRAEDAIAQLGVSSRVIQQKRAEAERLLEAAARKALGEVTKRAADELQNKARDAFRSFF.

A coiled-coil region spans residues 205–277 (LAQQRRVYAQ…DELQNKARDA (73 aa)).

This is an uncharacterized protein from Treponema pallidum (strain Nichols).